We begin with the raw amino-acid sequence, 337 residues long: Protein-methionine-sulfoxide reductase catalytic subunit MsrP (337 aa).

The tat-type signal signal peptide spans Met-1–Ala-48. Residues Asn-94, Tyr-97 to Glu-98, Cys-152, Thr-187, Asn-237, Arg-242, and Ser-253 to Lys-255 each bind Mo-molybdopterin.

It belongs to the MsrP family. As to quaternary structure, heterodimer of a catalytic subunit (MsrP) and a heme-binding subunit (MsrQ). It depends on Mo-molybdopterin as a cofactor. In terms of processing, predicted to be exported by the Tat system. The position of the signal peptide cleavage has not been experimentally proven.

It is found in the periplasm. It carries out the reaction L-methionyl-[protein] + a quinone + H2O = L-methionyl-(S)-S-oxide-[protein] + a quinol. It catalyses the reaction L-methionyl-[protein] + a quinone + H2O = L-methionyl-(R)-S-oxide-[protein] + a quinol. In terms of biological role, part of the MsrPQ system that repairs oxidized periplasmic proteins containing methionine sulfoxide residues (Met-O), using respiratory chain electrons. Thus protects these proteins from oxidative-stress damage caused by reactive species of oxygen and chlorine generated by the host defense mechanisms. MsrPQ is essential for the maintenance of envelope integrity under bleach stress, rescuing a wide series of structurally unrelated periplasmic proteins from methionine oxidation. The catalytic subunit MsrP is non-stereospecific, being able to reduce both (R-) and (S-) diastereoisomers of methionine sulfoxide. In Pseudomonas aeruginosa (strain ATCC 15692 / DSM 22644 / CIP 104116 / JCM 14847 / LMG 12228 / 1C / PRS 101 / PAO1), this protein is Protein-methionine-sulfoxide reductase catalytic subunit MsrP.